A 241-amino-acid chain; its full sequence is MAMKIDILTLFPEMFDIFNHSIIGRAIDKGILKIQSHNIRDYSMNKHKKVDDYPYGGGAGMVMTPQPIVDSIKDLKINNKGKVIFLGPRGKTFNQEIAKTLSKEKELIFICGHYEGIDERVYKYIDEEISLGDFVLTGGEMACIPVVDSICRLVPGVLSSSESYMEESFYNGLLEYPQYTRPECFEGENVPKVLLSGHHDNIRKWRRYKSLTITKTRRPDLFKQITLSKEDKKLLEIYSKE.

Residues G112 and 131 to 136 (LGDFVL) each bind S-adenosyl-L-methionine.

Belongs to the RNA methyltransferase TrmD family. As to quaternary structure, homodimer.

It localises to the cytoplasm. The catalysed reaction is guanosine(37) in tRNA + S-adenosyl-L-methionine = N(1)-methylguanosine(37) in tRNA + S-adenosyl-L-homocysteine + H(+). In terms of biological role, specifically methylates guanosine-37 in various tRNAs. In Clostridium novyi (strain NT), this protein is tRNA (guanine-N(1)-)-methyltransferase.